Here is a 447-residue protein sequence, read N- to C-terminus: Tubulin beta chain (447 aa).

GTP-binding residues include Gln-11, Glu-69, Ser-138, Gly-142, Thr-143, Gly-144, Asn-204, and Asn-226. A Mg(2+)-binding site is contributed by Glu-69. Residues 424–447 form a disordered region; the sequence is QYQDASISEGEEDYEEEPQVENEE. The span at 432–447 shows a compositional bias: acidic residues; that stretch reads EGEEDYEEEPQVENEE.

It belongs to the tubulin family. Dimer of alpha and beta chains. A typical microtubule is a hollow water-filled tube with an outer diameter of 25 nm and an inner diameter of 15 nM. Alpha-beta heterodimers associate head-to-tail to form protofilaments running lengthwise along the microtubule wall with the beta-tubulin subunit facing the microtubule plus end conferring a structural polarity. Microtubules usually have 13 protofilaments but different protofilament numbers can be found in some organisms and specialized cells. The cofactor is Mg(2+).

The protein localises to the cytoplasm. It is found in the cytoskeleton. In terms of biological role, tubulin is the major constituent of microtubules, a cylinder consisting of laterally associated linear protofilaments composed of alpha- and beta-tubulin heterodimers. Microtubules grow by the addition of GTP-tubulin dimers to the microtubule end, where a stabilizing cap forms. Below the cap, tubulin dimers are in GDP-bound state, owing to GTPase activity of alpha-tubulin. The chain is Tubulin beta chain from Uncinula necator (Grape powdery mildew).